Reading from the N-terminus, the 289-residue chain is 2-hydroxy-6-oxononadienedioate/2-hydroxy-6-oxononatrienedioate hydrolase (289 aa).

The 237-residue stretch at 39-275 folds into the AB hydrolase-1 domain; that stretch reads TVVMLHGSGP…RCGHWAQWEH (237 aa). Catalysis depends on His-269, which acts as the Proton acceptor.

Belongs to the AB hydrolase superfamily. MhpC family. As to quaternary structure, homodimer.

It carries out the reaction (2Z,4E)-2-hydroxy-6-oxonona-2,4-dienedioate + H2O = (2Z)-2-hydroxypenta-2,4-dienoate + succinate + H(+). The enzyme catalyses (2Z,4E,7E)-2-hydroxy-6-oxonona-2,4,7-trienedioate + H2O = (2Z)-2-hydroxypenta-2,4-dienoate + fumarate + H(+). It functions in the pathway aromatic compound metabolism; 3-phenylpropanoate degradation. Catalyzes the cleavage of the C5-C6 bond of 2-hydroxy-6-oxononadienedioate and 2-hydroxy-6-oxononatrienedioate, a dienol ring fission product of the bacterial meta-cleavage pathway for degradation of phenylpropionic acid. The polypeptide is 2-hydroxy-6-oxononadienedioate/2-hydroxy-6-oxononatrienedioate hydrolase (Paraburkholderia xenovorans (strain LB400)).